We begin with the raw amino-acid sequence, 84 residues long: ATP synthase subunit c (84 aa).

2 helical membrane passes run 9-29 (IFGS…GFSL) and 54-74 (IVAG…LLFI).

Belongs to the ATPase C chain family. F-type ATPases have 2 components, F(1) - the catalytic core - and F(0) - the membrane proton channel. F(1) has five subunits: alpha(3), beta(3), gamma(1), delta(1), epsilon(1). F(0) has three main subunits: a(1), b(2) and c(10-14). The alpha and beta chains form an alternating ring which encloses part of the gamma chain. F(1) is attached to F(0) by a central stalk formed by the gamma and epsilon chains, while a peripheral stalk is formed by the delta and b chains.

It localises to the cell inner membrane. In terms of biological role, f(1)F(0) ATP synthase produces ATP from ADP in the presence of a proton or sodium gradient. F-type ATPases consist of two structural domains, F(1) containing the extramembraneous catalytic core and F(0) containing the membrane proton channel, linked together by a central stalk and a peripheral stalk. During catalysis, ATP synthesis in the catalytic domain of F(1) is coupled via a rotary mechanism of the central stalk subunits to proton translocation. Functionally, key component of the F(0) channel; it plays a direct role in translocation across the membrane. A homomeric c-ring of between 10-14 subunits forms the central stalk rotor element with the F(1) delta and epsilon subunits. This Histophilus somni (strain 129Pt) (Haemophilus somnus) protein is ATP synthase subunit c.